The chain runs to 187 residues: Putative manganese efflux pump MntP (187 aa).

A run of 6 helical transmembrane segments spans residues 3-23, 39-59, 65-85, 106-126, 129-149, and 166-186; these read YYTLWVIAFGLSMDAFAVSVG, IALCFGLFQACMPLLGYYVGS, ISEFDHWIAFALLCVIGINMI, LTMLGVATSIDALAMGVSFAF, VNIWTAAAIIGITTTILSLFG, and LLGGIILIAMGVKVLIEHRVF.

It belongs to the MntP (TC 9.B.29) family.

The protein localises to the cell inner membrane. Its function is as follows. Probably functions as a manganese efflux pump. This is Putative manganese efflux pump MntP from Actinobacillus succinogenes (strain ATCC 55618 / DSM 22257 / CCUG 43843 / 130Z).